The chain runs to 448 residues: Allantoinase (448 aa).

His-60, His-62, Lys-147, His-183, His-239, and Asp-312 together coordinate Zn(2+). N6-carboxylysine is present on Lys-147.

The protein belongs to the metallo-dependent hydrolases superfamily. Allantoinase family. Homotetramer. Zn(2+) serves as cofactor. Carboxylation allows a single lysine to coordinate two zinc ions.

It carries out the reaction (S)-allantoin + H2O = allantoate + H(+). It functions in the pathway nitrogen metabolism; (S)-allantoin degradation; allantoate from (S)-allantoin: step 1/1. Catalyzes the conversion of allantoin (5-ureidohydantoin) to allantoic acid by hydrolytic cleavage of the five-member hydantoin ring. The sequence is that of Allantoinase from Deinococcus radiodurans (strain ATCC 13939 / DSM 20539 / JCM 16871 / CCUG 27074 / LMG 4051 / NBRC 15346 / NCIMB 9279 / VKM B-1422 / R1).